The sequence spans 61 residues: Small ribosomal subunit protein uS14 (61 aa).

Residues Cys24, Cys27, Cys40, and Cys43 each contribute to the Zn(2+) site.

This sequence belongs to the universal ribosomal protein uS14 family. Zinc-binding uS14 subfamily. Part of the 30S ribosomal subunit. Contacts proteins S3 and S10. It depends on Zn(2+) as a cofactor.

Its function is as follows. Binds 16S rRNA, required for the assembly of 30S particles and may also be responsible for determining the conformation of the 16S rRNA at the A site. This is Small ribosomal subunit protein uS14 from Mesomycoplasma hyopneumoniae (strain 232) (Mycoplasma hyopneumoniae).